The primary structure comprises 86 residues: Exodeoxyribonuclease 7 small subunit (86 aa).

Residues 1 to 26 (MQDELFETEKAPQKNTKNAKNAPKKS) form a disordered region.

This sequence belongs to the XseB family. In terms of assembly, heterooligomer composed of large and small subunits.

Its subcellular location is the cytoplasm. The enzyme catalyses Exonucleolytic cleavage in either 5'- to 3'- or 3'- to 5'-direction to yield nucleoside 5'-phosphates.. Functionally, bidirectionally degrades single-stranded DNA into large acid-insoluble oligonucleotides, which are then degraded further into small acid-soluble oligonucleotides. The sequence is that of Exodeoxyribonuclease 7 small subunit from Helicobacter pylori (strain Shi470).